The primary structure comprises 877 residues: Alanine--tRNA ligase (877 aa).

Residues His562, His566, Cys664, and His668 each coordinate Zn(2+).

It belongs to the class-II aminoacyl-tRNA synthetase family. Requires Zn(2+) as cofactor.

It localises to the cytoplasm. The catalysed reaction is tRNA(Ala) + L-alanine + ATP = L-alanyl-tRNA(Ala) + AMP + diphosphate. In terms of biological role, catalyzes the attachment of alanine to tRNA(Ala) in a two-step reaction: alanine is first activated by ATP to form Ala-AMP and then transferred to the acceptor end of tRNA(Ala). Also edits incorrectly charged Ser-tRNA(Ala) and Gly-tRNA(Ala) via its editing domain. The polypeptide is Alanine--tRNA ligase (Picosynechococcus sp. (strain ATCC 27264 / PCC 7002 / PR-6) (Agmenellum quadruplicatum)).